Here is a 708-residue protein sequence, read N- to C-terminus: F-box protein MAX2 homolog A (708 aa).

The F-box domain maps to 2–49 (ATQLNDLPDVILSNIIAAVTDVRSRNSTSFVCRKWLVLERSTRVSLTL).

In terms of assembly, part of a putative SCF (SKP1/Cullin/F-box) ubiquitin ligase complex. Interacts with DAD2. Interacts with KAI2IA in the presence of (-)-germacrene D. As to expression, mainly expressed in fully expanded leaves, lateral roots, axillary and shoot apex, and, to a lower extent, in internodes and nodes.

The protein resides in the nucleus. Functionally, component of SCF(ASK-cullin-F-box) E3 ubiquitin ligase complexes, which may mediate the ubiquitination and subsequent proteasomal degradation of target proteins. Is necessary for responses to strigolactones and may be involved in the ubiquitin-mediated degradation of specific proteins that activate axillary growth. Targets probably SMAX1A to degradation upon the formation of an E3 SCF ubiquitin ligase complex (ASK-cullin-F-box) containing MAX2A and KAI2IA in response to (-)-germacrene D in the stigma. This Petunia hybrida (Petunia) protein is F-box protein MAX2 homolog A.